A 246-amino-acid chain; its full sequence is Ribosomal RNA small subunit methyltransferase J (246 aa).

S-adenosyl-L-methionine contacts are provided by residues 115 to 116 and Asp169; that span reads ER.

It belongs to the methyltransferase superfamily. RsmJ family.

It localises to the cytoplasm. It catalyses the reaction guanosine(1516) in 16S rRNA + S-adenosyl-L-methionine = N(2)-methylguanosine(1516) in 16S rRNA + S-adenosyl-L-homocysteine + H(+). Functionally, specifically methylates the guanosine in position 1516 of 16S rRNA. This is Ribosomal RNA small subunit methyltransferase J from Buchnera aphidicola subsp. Acyrthosiphon pisum (strain Tuc7).